The following is a 336-amino-acid chain: Fructose-1,6-bisphosphatase class 1 (336 aa).

Residues Glu-90, Asp-112, Leu-114, and Asp-115 each coordinate Mg(2+). Substrate contacts are provided by residues 115–118, Asn-211, and Lys-277; that span reads DGSS. Mg(2+) is bound at residue Glu-283.

This sequence belongs to the FBPase class 1 family. In terms of assembly, homotetramer. The cofactor is Mg(2+).

It is found in the cytoplasm. It carries out the reaction beta-D-fructose 1,6-bisphosphate + H2O = beta-D-fructose 6-phosphate + phosphate. It functions in the pathway carbohydrate biosynthesis; gluconeogenesis. This Pseudomonas entomophila (strain L48) protein is Fructose-1,6-bisphosphatase class 1.